We begin with the raw amino-acid sequence, 428 residues long: Bacteriochlorophyll synthase 44.5 kDa chain (428 aa).

12 helical membrane-spanning segments follow: residues 3 to 23 (LGWL…AVVV), 32 to 52 (LMVV…ALHY), 73 to 93 (FFVI…AVAV), 115 to 135 (GFGV…ATEP), 144 to 164 (ITWL…GHFL), 172 to 192 (LLWI…LAVW), 225 to 245 (AFTF…LILE), 269 to 289 (GVFF…IGSL), 291 to 311 (GWVV…VALG), 317 to 337 (ALVP…VAAI), 358 to 378 (LWGA…AGAA), and 393 to 413 (LVFG…TGVV).

This sequence belongs to the PucC family.

Its subcellular location is the membrane. It participates in porphyrin-containing compound metabolism; bacteriochlorophyll biosynthesis (light-independent). The protein is Bacteriochlorophyll synthase 44.5 kDa chain of Rhodobacter capsulatus (strain ATCC BAA-309 / NBRC 16581 / SB1003).